We begin with the raw amino-acid sequence, 276 residues long: Prohibitin 1 (276 aa).

This sequence belongs to the prohibitin family.

Required for larval metabolism or for the progression of the larva into a pupa. The protein is Prohibitin 1 of Drosophila melanogaster (Fruit fly).